The following is a 180-amino-acid chain: 3-hydroxyanthranilate 3,4-dioxygenase (180 aa).

Arg-46 is an O2 binding site. His-50, Glu-56, and His-94 together coordinate Fe cation. A substrate-binding site is contributed by Glu-56. Substrate contacts are provided by Arg-98 and Glu-109. 4 residues coordinate Fe cation: Cys-124, Cys-127, Cys-161, and Cys-164.

It belongs to the 3-HAO family. In terms of assembly, homodimer. It depends on Fe(2+) as a cofactor.

It catalyses the reaction 3-hydroxyanthranilate + O2 = (2Z,4Z)-2-amino-3-carboxymuconate 6-semialdehyde. The protein operates within cofactor biosynthesis; NAD(+) biosynthesis; quinolinate from L-kynurenine: step 3/3. Functionally, catalyzes the oxidative ring opening of 3-hydroxyanthranilate to 2-amino-3-carboxymuconate semialdehyde, which spontaneously cyclizes to quinolinate. This chain is 3-hydroxyanthranilate 3,4-dioxygenase, found in Jannaschia sp. (strain CCS1).